A 1012-amino-acid chain; its full sequence is Vacuolar membrane protease (1012 aa).

Residues 1-60 (MRRSTDPRNLLVRRGPLLVDGESAISELDPGFFPTGDAPKMSSTTRRRFNLIAFTPGPVT) are Cytoplasmic-facing. The helical transmembrane segment at 61 to 81 (VISSLVYLALLIPLLLVHTIV) threads the bilayer. At 82-432 (PSAPKSNPKG…SFAVFRLHTL (351 aa)) the chain is on the vacuolar side. N-linked (GlcNAc...) asparagine glycosylation is present at N159. Residues H215 and D227 each contribute to the Zn(2+) site. E261 (proton acceptor) is an active-site residue. Zn(2+) contacts are provided by E262, E287, and H360. A helical transmembrane segment spans residues 433–453 (FAISVTLLVVCPIVLFVIGII). The Cytoplasmic portion of the chain corresponds to 454-487 (LSKMDKMYLFSIHETIPETKEKVSVRGLRGLFRY). The helical transmembrane segment at 488–508 (PIILVVSSGILIGLSYLLAKV) threads the bilayer. The Vacuolar segment spans residues 509–518 (NPFIVHSSSY). Residues 519–539 (AVWSMMLSSWIFMTWFLSCIA) form a helical membrane-spanning segment. The Cytoplasmic portion of the chain corresponds to 540-550 (DFFRPSALHRA). A helical membrane pass occupies residues 551 to 571 (YTFTWQLLVMWVLLVISTVYV). The Vacuolar portion of the chain corresponds to 572–575 (NQHD). A helical transmembrane segment spans residues 576–596 (IAAGYFIVFYFAGTFLATLIS). Over 597–710 (YLELFALPNK…WSASLPTWTW (114 aa)) the chain is Cytoplasmic. The segment covering 614–629 (SQYPSRLGSNRSSRIL) has biased composition (polar residues). Residues 614–660 (SQYPSRLGSNRSSRILSPSADELPTGGDNNGEIYDGEEEPTESSSLL) are disordered. Residues 711–731 (VLQFLFVGPVVIMFIGQLGLF) form a helical membrane-spanning segment. Residues 732-743 (LTSAMNQVGADG) lie on the Vacuolar side of the membrane. A helical membrane pass occupies residues 744–764 (VGLLVVYIAIAVFSVLLLIPL). Topologically, residues 765–777 (SPFIHRFTYHVPT) are cytoplasmic. Residues 778–798 (FLLLVFIATLIYNLAAFPFSA) traverse the membrane as a helical segment. The Vacuolar portion of the chain corresponds to 799–1012 (ENRLKIFFVQ…DGLVEVSRGF (214 aa)). N842 and N878 each carry an N-linked (GlcNAc...) asparagine glycan.

This sequence belongs to the peptidase M28 family. The cofactor is Zn(2+).

It localises to the vacuole membrane. May be involved in vacuolar sorting and osmoregulation. The chain is Vacuolar membrane protease from Coccidioides posadasii (strain RMSCC 757 / Silveira) (Valley fever fungus).